We begin with the raw amino-acid sequence, 582 residues long: TRAF-type zinc finger domain-containing protein 1 (582 aa).

Alanine 2 is modified (N-acetylalanine). Residues 27–103 form a TRAF-type zinc finger; it reads IHEIHCQRNI…DLELSILKLK (77 aa). Serine 191 carries the post-translational modification Phosphoserine. Residues 217–236 form a disordered region; that stretch reads EQERQERNRGQQPPKEGGEE. Serine 278, serine 320, serine 326, serine 327, serine 409, serine 415, serine 430, and serine 470 each carry phosphoserine. The interval 401–582 is disordered; that stretch reads TEGIPRLDSQ…AGDAEEEEEE (182 aa). Composition is skewed to polar residues over residues 454–471 and 486–495; these read PINNMTATYNQLSRSTSG and LSNSDSQDIQ.

In terms of assembly, interacts with MAVS, TICAM1, TRAF1, TRAF2, TRAF3. Interacts with TRAF6.

Negative feedback regulator that controls excessive innate immune responses. Regulates both Toll-like receptor 4 (TLR4) and DDX58/RIG1-like helicases (RLH) pathways. May inhibit the LTR pathway by direct interaction with TRAF6 and attenuation of NF-kappa-B activation. May negatively regulate the RLH pathway downstream from MAVS and upstream of NF-kappa-B and IRF3. The polypeptide is TRAF-type zinc finger domain-containing protein 1 (TRAFD1) (Homo sapiens (Human)).